The following is a 624-amino-acid chain: Phosphatidylinositol 4-kinase lsb6 (624 aa).

Residues 1–31 (MESTFHSDTLDSFPNYQENSLNTNEEQTNPL) show a composition bias toward polar residues. Residues 1–53 (MESTFHSDTLDSFPNYQENSLNTNEEQTNPLESLRDGWASSNSSSSSSLLLPD) are disordered. Low complexity predominate over residues 40–51 (SSNSSSSSSLLL). In terms of domain architecture, PI3K/PI4K catalytic spans 145-520 (GVFPVLISKG…LLELPNLYVV (376 aa)). Residues 151–157 (ISKGSSG) are G-loop. Residues 346–354 (RNTDRNLDN) are catalytic loop. Residues 409–429 (AIDNSLAFPYKHPDSWRSFPY) form an activation loop region.

Belongs to the PI3/PI4-kinase family. The cofactor is Mg(2+). Mn(2+) serves as cofactor.

The protein localises to the cell membrane. It localises to the vacuole membrane. Its subcellular location is the golgi apparatus membrane. The catalysed reaction is a 1,2-diacyl-sn-glycero-3-phospho-(1D-myo-inositol) + ATP = a 1,2-diacyl-sn-glycero-3-phospho-(1D-myo-inositol 4-phosphate) + ADP + H(+). Functionally, may play a role in endocytic and/or exocytic pathways. This Schizosaccharomyces pombe (strain 972 / ATCC 24843) (Fission yeast) protein is Phosphatidylinositol 4-kinase lsb6 (lsb6).